The primary structure comprises 1273 residues: DNA-directed RNA polymerase subunit beta (1273 aa).

Belongs to the RNA polymerase beta chain family. As to quaternary structure, the RNAP catalytic core consists of 2 alpha, 1 beta, 1 beta' and 1 omega subunit. When a sigma factor is associated with the core the holoenzyme is formed, which can initiate transcription.

The catalysed reaction is RNA(n) + a ribonucleoside 5'-triphosphate = RNA(n+1) + diphosphate. Its function is as follows. DNA-dependent RNA polymerase catalyzes the transcription of DNA into RNA using the four ribonucleoside triphosphates as substrates. In Onion yellows phytoplasma (strain OY-M), this protein is DNA-directed RNA polymerase subunit beta.